Reading from the N-terminus, the 193-residue chain is MATPASTPDTRALVADFVGYKLRQKGYVCGAGPGEGPAADPLHQAMRAAGDEFETRFRRTFSDLAAQLHVTPGSAQQRFTQVSDELFQGGPNWGRLVAFFVFGAALCAESVNKEMEPLVGQVQDWMVAYLETRLADWIHSSGGWAEFTALYGDGALEEARRLREGNWASVRTVLTGAVALGALVTVGAFFASK.

The residue at position 2 (alanine 2) is an N-acetylalanine. The short motif at 9-29 is the BH4 element; sequence DTRALVADFVGYKLRQKGYVC. The BH1 signature appears at 85–104; sequence ELFQGGPNWGRLVAFFVFGA. The short motif at 136 to 151 is the BH2 element; sequence DWIHSSGGWAEFTALY.

This sequence belongs to the Bcl-2 family. In terms of assembly, interacts with HIF3A isoform 2 (via C-terminus domain). Interacts with BOP. Expressed in almost all myeloid cell lines and in a wide range of tissues, with highest levels in brain, colon, and salivary gland.

The protein localises to the mitochondrion membrane. In terms of biological role, promotes cell survival. Blocks dexamethasone-induced apoptosis. Mediates survival of postmitotic Sertoli cells by suppressing death-promoting activity of BAX. In Mus musculus (Mouse), this protein is Bcl-2-like protein 2 (Bcl2l2).